Reading from the N-terminus, the 410-residue chain is Translation initiation factor 2 subunit gamma (410 aa).

Residues 6 to 203 (QSEVNIGMVG…AIQEFIPTPK (198 aa)) form the tr-type G domain. The interval 15-22 (GHVDHGKT) is G1. Mg(2+)-binding residues include Asp-18, Thr-22, Gly-43, and Ser-45. 18-23 (DHGKTS) serves as a coordination point for GTP. Residues 43–47 (GISIR) form a G2 region. Zn(2+)-binding residues include Cys-58, Cys-61, Cys-73, and Cys-76. Residues 90–93 (DAPG) are G3. GTP-binding positions include 146 to 149 (NKID) and 181 to 183 (SAH). A G4 region spans residues 146 to 149 (NKID). Residues 181–183 (SAH) form a G5 region.

Belongs to the TRAFAC class translation factor GTPase superfamily. Classic translation factor GTPase family. EIF2G subfamily. Heterotrimer composed of an alpha, a beta and a gamma chain. The cofactor is Mg(2+).

It catalyses the reaction GTP + H2O = GDP + phosphate + H(+). Its function is as follows. eIF-2 functions in the early steps of protein synthesis by forming a ternary complex with GTP and initiator tRNA. The sequence is that of Translation initiation factor 2 subunit gamma from Methanococcus vannielii (strain ATCC 35089 / DSM 1224 / JCM 13029 / OCM 148 / SB).